Consider the following 331-residue polypeptide: Carbonic anhydrase-related protein 11 (331 aa).

Positions 1–23 are cleaved as a signal peptide; the sequence is MGGAARLSAPRALVLWAVLGAAA. The region spanning 33–306 is the Alpha-carbonic anhydrase domain; the sequence is DWWSYKDNLQ…LAHRALRGNR (274 aa). Residues N118, N170, N189, and N263 are each glycosylated (N-linked (GlcNAc...) asparagine). The interval 303–331 is disordered; it reads RGNRDPRHPERRCRGPNYRLHVDGAPHGR. Residues 322 to 331 are compositionally biased toward basic and acidic residues; the sequence is LHVDGAPHGR.

It belongs to the alpha-carbonic anhydrase family.

It localises to the secreted. In terms of biological role, does not have a catalytic activity. In Sus scrofa (Pig), this protein is Carbonic anhydrase-related protein 11 (CA11).